A 325-amino-acid polypeptide reads, in one-letter code: Mitochondrial citrate transporter C (325 aa).

Solcar repeat units follow at residues Ala15–Met105, Lys117–Phe208, and Leu221–Lys310. The next 6 helical transmembrane spans lie at Leu21–Ile41, Gly82–Tyr102, Leu121–Val141, Thr187–Ala207, Leu221–Asn241, and Phe282–Val303.

The protein belongs to the mitochondrial carrier (TC 2.A.29) family.

It localises to the mitochondrion inner membrane. In terms of biological role, mitochondrial transporter that does not mediate citrate export from mitochondria to cytoplasm. Its exact function has still to be determined. The chain is Mitochondrial citrate transporter C from Aspergillus niger (strain ATCC 1015 / CBS 113.46 / FGSC A1144 / LSHB Ac4 / NCTC 3858a / NRRL 328 / USDA 3528.7).